The chain runs to 190 residues: dCTP deaminase (190 aa).

113–118 (KSTYAR) lines the dCTP pocket. Glutamate 139 (proton donor/acceptor) is an active-site residue. DCTP-binding residues include glutamine 158, tyrosine 172, lysine 181, and glutamine 182.

Belongs to the dCTP deaminase family. Homotrimer.

The catalysed reaction is dCTP + H2O + H(+) = dUTP + NH4(+). It functions in the pathway pyrimidine metabolism; dUMP biosynthesis; dUMP from dCTP (dUTP route): step 1/2. Its function is as follows. Catalyzes the deamination of dCTP to dUTP. The sequence is that of dCTP deaminase from Chlamydia felis (strain Fe/C-56) (Chlamydophila felis).